The chain runs to 183 residues: Potassium-transporting ATPase KdpC subunit (183 aa).

Residues 10 to 30 traverse the membrane as a helical segment; it reads ASLLVLSLVTGVAYPLLVTGI.

It belongs to the KdpC family. In terms of assembly, the system is composed of three essential subunits: KdpA, KdpB and KdpC.

It localises to the cell inner membrane. Its function is as follows. Part of the high-affinity ATP-driven potassium transport (or Kdp) system, which catalyzes the hydrolysis of ATP coupled with the electrogenic transport of potassium into the cytoplasm. This subunit acts as a catalytic chaperone that increases the ATP-binding affinity of the ATP-hydrolyzing subunit KdpB by the formation of a transient KdpB/KdpC/ATP ternary complex. In Pseudomonas aeruginosa (strain UCBPP-PA14), this protein is Potassium-transporting ATPase KdpC subunit.